A 76-amino-acid chain; its full sequence is Omega/Kappa-hexatoxin-Hv1h (76 aa).

A signal peptide spans 1–22; the sequence is MNTATGFIVLLVLATILGGIEA. Residues 23-35 constitute a propeptide that is removed on maturation; sequence GESHMRKDAMGRV. Intrachain disulfides connect Cys40-Cys55, Cys47-Cys60, and Cys54-Cys74.

It belongs to the neurotoxin 08 (Shiva) family. 02 (omega/kappa toxin) subfamily. As to expression, expressed by the venom gland.

The protein localises to the secreted. Its function is as follows. Toxin that may inhibit ion channels. In Hadronyche versuta (Blue mountains funnel-web spider), this protein is Omega/Kappa-hexatoxin-Hv1h.